The chain runs to 741 residues: Zinc finger and BTB domain-containing protein 20 (741 aa).

Residues 1-17 (MLERKKPKTAENQKASE) show a composition bias toward basic and acidic residues. The disordered stretch occupies residues 1 to 28 (MLERKKPKTAENQKASEENEITQPGGSS). Positions 104 to 167 (CDVTVRIHGS…MYSGVLRVSQ (64 aa)) constitute a BTB domain. Residues 203-235 (GIQDSGQDTPRGTPESGTSGQSSDTESGYLQSH) are disordered. Residues 206-235 (DSGQDTPRGTPESGTSGQSSDTESGYLQSH) are compositionally biased toward polar residues. Thr211 is subject to Phosphothreonine. Lys330 participates in a covalent cross-link: Glycyl lysine isopeptide (Lys-Gly) (interchain with G-Cter in SUMO1); alternate. Lys330 is covalently cross-linked (Glycyl lysine isopeptide (Lys-Gly) (interchain with G-Cter in SUMO2); alternate). The interval 350–440 (RNESEECTED…SSPERSNESE (91 aa)) is disordered. The residue at position 353 (Ser353) is a Phosphoserine. Acidic residues predominate over residues 354–367 (EECTEDTDQAEGTE). Thr357 is modified (phosphothreonine). Lys371 is covalently cross-linked (Glycyl lysine isopeptide (Lys-Gly) (interchain with G-Cter in SUMO2)). A compositionally biased stretch (low complexity) spans 404-423 (AEPAQPEQAAEAPAESSAQP). C2H2-type zinc fingers lie at residues 578–600 (YECT…MFVH), 606–628 (HQCS…MVTH), 634–656 (YQCS…MRLH), and 662–684 (YECY…VALH). Phosphothreonine is present on residues Thr690 and Thr695. Residues 715–737 (YVCSVCPAKFDQIEQFNDHMRMH) form a C2H2-type 5 zinc finger. Lys723 participates in a covalent cross-link: Glycyl lysine isopeptide (Lys-Gly) (interchain with G-Cter in SUMO2).

Can homodimerize. Binds to DNA. Post-translationally, sumoylated with SUMO1. Specifically expressed in early hippocampal neurons, cerebellar granule cells and gliogenic progenitors as well as in differentiated glia. Expressed in adult and aged myogenic satellite cells.

It localises to the nucleus. May be a transcription factor that may be involved in hematopoiesis, oncogenesis, and immune responses. Plays a role in postnatal myogenesis, may be involved in the regulation of satellite cells self-renewal. This chain is Zinc finger and BTB domain-containing protein 20 (Zbtb20), found in Mus musculus (Mouse).